A 394-amino-acid polypeptide reads, in one-letter code: MSKEKFERSKPHVNVGTIGHVDHGKTTLTAAITTVLAKVYGGAAKDFAAIDNAPEEKERGITISTSHVEYDTPTRHYAHVDCPGHADYVKNMITGAAQMDGAILVVAATDGPMPQTREHILLSRQVGVPFIVVFMNKCDMVDDEELLELVEMEVRELLSEYDFPGDDLPVIQGSALKALEGDEEWSKKIVELADALDNYIPEPERDIDKPFIMPIEDVFSISGRGTVVTGRVERGIVRTGDECEIVGMKDTTKTTVTGVEMFRKLLDEGRAGENIGALLRGTKRDDVERGQVLAKPGTITPHTKFEAEVYVLSKDEGGRHTPFFKGYRPQFYFRTTDVTGAVELPEGVEMVMPGDNLKFVVDLIAPIAMDEGLRFAIREGGRTVGAGVVSKIMD.

The tr-type G domain occupies 10–204 (KPHVNVGTIG…ALDNYIPEPE (195 aa)). Residues 19–26 (GHVDHGKT) form a G1 region. GTP is bound at residue 19 to 26 (GHVDHGKT). Position 26 (threonine 26) interacts with Mg(2+). Positions 60-64 (GITIS) are G2. The tract at residues 81–84 (DCPG) is G3. Residues 81-85 (DCPGH) and 136-139 (NKCD) contribute to the GTP site. The G4 stretch occupies residues 136 to 139 (NKCD). Residues 174–176 (SAL) are G5.

Belongs to the TRAFAC class translation factor GTPase superfamily. Classic translation factor GTPase family. EF-Tu/EF-1A subfamily. As to quaternary structure, monomer.

It is found in the cytoplasm. It catalyses the reaction GTP + H2O = GDP + phosphate + H(+). Functionally, GTP hydrolase that promotes the GTP-dependent binding of aminoacyl-tRNA to the A-site of ribosomes during protein biosynthesis. The chain is Elongation factor Tu from Idiomarina loihiensis (strain ATCC BAA-735 / DSM 15497 / L2-TR).